A 4468-amino-acid polypeptide reads, in one-letter code: Replicase polyprotein 1a (4468 aa).

Residues Leu-54 to Gly-196 form the CoV Nsp1 globular domain. Residues Phe-217–Gly-247 form the BetaCoV Nsp1 C-terminal domain. Positions Ile-251–Met-511 constitute a CoV Nsp2 N-terminal domain. The Zn(2+) site is built by Cys-390, Cys-395, Cys-411, and Cys-414. A C4 region spans residues Cys-390–Cys-414. Positions Cys-518 to Val-706 constitute a CoV Nsp2 middle domain. The 107-residue stretch at Ser-726–Ala-832 folds into the CoV Nsp2 C-terminal domain. One can recognise a Ubiquitin-like 1 domain in the interval Lys-834–Asp-946. Residues Ser-999–Ser-1027 are disordered. Positions Ala-1084 to Lys-1333 constitute a Peptidase C16 1 domain. The For PL1-PRO activity role is filled by Cys-1121. Positions 1198, 1201, 1224, and 1226 each coordinate Zn(2+). The C4-type 1 zinc finger occupies Cys-1198–Cys-1226. Active-site for PL1-PRO activity residues include His-1272 and Asp-1283. Positions Asn-1323 to Val-1482 constitute a Macro domain. The DPUP domain occupies Asp-1537 to Asn-1609. In terms of domain architecture, Ubiquitin-like 2 spans Ala-1608–Gln-1663. One can recognise a Peptidase C16 2 domain in the interval Ala-1678–Gln-1937. The active-site For PL2-PRO activity is the Cys-1716. Zn(2+) contacts are provided by Cys-1794, Cys-1796, Cys-1828, and Cys-1830. The C4-type 2 zinc-finger motif lies at Cys-1794–Cys-1830. Catalysis depends on for PL2-PRO activity residues His-1873 and Asp-1887. In terms of domain architecture, Nucleic acid-binding spans Ile-1951–Cys-2052. One can recognise a G2M domain in the interval Gln-2107–Glu-2256. An HD1 region spans residues Ala-2225–Val-2645. The next 2 helical transmembrane spans lie at Phe-2286–Leu-2306 and Ile-2314–Val-2334. One can recognise a 3Ecto domain in the interval Gly-2322 to Asp-2383. Disulfide bonds link Cys-2338/Cys-2362 and Cys-2353/Cys-2359. The next 2 membrane-spanning stretches (helical) occupy residues Leu-2400 to Met-2420 and Leu-2442 to Val-2462. The Y1 stretch occupies residues Cys-2470–Asp-2560. Residues Cys-2470 to Gly-2837 enclose the CoV Nsp3 Y domain. His-2474, Cys-2479, Cys-2484, Cys-2487, Cys-2520, His-2523, Cys-2527, and Cys-2530 together coordinate Zn(2+). The interval His-2474–Cys-2487 is ZF1. The interval Cys-2520–Cys-2530 is ZF2. Residues Ser-2561 to Ala-2653 form a Y2 region. The segment at Ser-2561–Gly-2837 is coV-Y. The helical transmembrane segment at Ala-2625–Val-2645 threads the bilayer. The interval Asn-2654–Gly-2736 is Y3. The interval Val-2737–Gly-2837 is Y4. 6 helical membrane-spanning segments follow: residues Leu-2847–Val-2867, Ala-3096–Leu-3116, Ala-3118–Ile-3138, Val-3150–Val-3170, Leu-3177–Met-3197, and Leu-3202–Val-3222. The interval Leu-2847–Val-3222 is HD2. The region spanning Ile-3236–Gln-3333 is the Nsp4C domain. In terms of domain architecture, Peptidase C30 spans Ser-3334–Gln-3635. Active-site for 3CL-PRO activity residues include His-3374 and Cys-3478. An HD3 region spans residues Leu-3526–Ser-3860. The next 7 helical transmembrane spans lie at Gly-3644–Val-3664, Thr-3674–Ile-3694, Leu-3699–Val-3719, Thr-3742–Met-3762, Val-3769–Gly-3789, Val-3796–Ala-3816, and Leu-3840–Ser-3860. In terms of domain architecture, RdRp Nsp7 cofactor spans Ser-3922–Gln-4010. Residues Ala-4011 to Gln-4207 form the RdRp Nsp8 cofactor domain. A Nsp9 ssRNA-binding domain is found at Asn-4208–Gln-4317. Residues Ala-4318–Ser-4455 enclose the ExoN/MTase coactivator domain. Residues Cys-4391, Cys-4394, His-4400, Cys-4407, Cys-4433, Cys-4436, Cys-4444, and Cys-4446 each coordinate Zn(2+). Zinc fingers lie at residues Cys-4391–Cys-4407 and Cys-4433–Cys-4446.

It belongs to the coronaviruses polyprotein 1ab family. In terms of assembly, 3CL-PRO exists as monomer and homodimer. Eight copies of nsp7 and eight copies of nsp8 assemble to form a heterohexadecamer. Nsp9 is a dimer. Nsp10 forms a dodecamer. In terms of processing, specific enzymatic cleavages in vivo by its own proteases yield mature proteins. 3CL-PRO and PL-PRO proteinases are autocatalytically processed.

The protein localises to the host membrane. It localises to the host cytoplasm. It is found in the host perinuclear region. It carries out the reaction Thiol-dependent hydrolysis of ester, thioester, amide, peptide and isopeptide bonds formed by the C-terminal Gly of ubiquitin (a 76-residue protein attached to proteins as an intracellular targeting signal).. The catalysed reaction is TSAVLQ-|-SGFRK-NH2 and SGVTFQ-|-GKFKK the two peptides corresponding to the two self-cleavage sites of the SARS 3C-like proteinase are the two most reactive peptide substrates. The enzyme exhibits a strong preference for substrates containing Gln at P1 position and Leu at P2 position.. It catalyses the reaction a 5'-end diphospho-ribonucleoside in mRNA + GTP + H(+) = a 5'-end (5'-triphosphoguanosine)-ribonucleoside in mRNA + diphosphate. Its function is as follows. The papain-like proteinase 1 (PL1-PRO) and papain-like proteinase 2 (PL2-PRO) are responsible for the cleavages located at the N-terminus of the replicase polyprotein. In addition, PLP2 possesses a deubiquitinating/deISGylating activity and processes both 'Lys-48'- and 'Lys-63'-linked polyubiquitin chains from cellular substrates. Antagonizes innate immune induction of type I interferon by blocking the phosphorylation, dimerization and subsequent nuclear translocation of host IRF-3. Functionally, responsible for the majority of cleavages as it cleaves the C-terminus of replicase polyprotein at 11 sites. Recognizes substrates containing the core sequence [ILMVF]-Q-|-[SGACN]. Inhibited by the substrate-analog Cbz-Val-Asn-Ser-Thr-Leu-Gln-CMK. Also contains an ADP-ribose-1''-phosphate (ADRP)-binding function. Nsp7-nsp8 hexadecamer may possibly confer processivity to the polymerase, maybe by binding to dsRNA or by producing primers utilized by the latter. In terms of biological role, catalytic subunit of viral RNA capping enzyme which catalyzes the RNA guanylyltransferase reaction for genomic and sub-genomic RNAs. The kinase-like NiRAN domain of NSP12 transfers RNA to the amino terminus of NSP9, forming a covalent RNA-protein intermediate. Subsequently, the NiRAN domain transfers RNA to GDP, forming the core cap structure GpppA-RNA. The NSP14 and NSP16 methyltransferases then add methyl groups to form functional cap structures. Its function is as follows. Binds to the 40S ribosomal subunit and inhibits host translation. The nsp1-40S ribosome complex further induces an endonucleolytic cleavage near the 5'UTR of host mRNAs, targeting them for degradation. By suppressing host gene expression, nsp1 facilitates efficient viral gene expression in infected cells and evasion from host immune response. The sequence is that of Replicase polyprotein 1a from Murine coronavirus (strain A59) (MHV-A59).